A 120-amino-acid polypeptide reads, in one-letter code: Large ribosomal subunit protein uL18 (120 aa).

Basic and acidic residues predominate over residues 1-10 (MKLTRRESKE). A disordered region spans residues 1–26 (MKLTRRESKERRHRRVRGKVQGSPER).

This sequence belongs to the universal ribosomal protein uL18 family. Part of the 50S ribosomal subunit; part of the 5S rRNA/L5/L18/L25 subcomplex. Contacts the 5S and 23S rRNAs.

Functionally, this is one of the proteins that bind and probably mediate the attachment of the 5S RNA into the large ribosomal subunit, where it forms part of the central protuberance. The protein is Large ribosomal subunit protein uL18 of Nostoc sp. (strain PCC 7120 / SAG 25.82 / UTEX 2576).